Reading from the N-terminus, the 101-residue chain is Guanyl-specific ribonuclease Po1 (101 aa).

Q1 is modified (pyrrolidone carboxylic acid). Disulfide bonds link C7–C84, C9–C99, and C48–C82. H36 is a catalytic residue. The active-site Proton acceptor is E54. Residue H87 is the Proton donor of the active site.

Belongs to the ribonuclease N1/T1 family.

The catalysed reaction is [RNA] containing guanosine + H2O = an [RNA fragment]-3'-guanosine-3'-phosphate + a 5'-hydroxy-ribonucleotide-3'-[RNA fragment].. Inhibited by divalent cations. Inhibition decreases in the order zinc, lead, cadmium, nickel, mercury. The polypeptide is Guanyl-specific ribonuclease Po1 (Pleurotus ostreatus (Oyster mushroom)).